A 577-amino-acid chain; its full sequence is Arginine--tRNA ligase (577 aa).

Positions P122–H132 match the 'HIGH' region motif.

This sequence belongs to the class-I aminoacyl-tRNA synthetase family. As to quaternary structure, monomer.

Its subcellular location is the cytoplasm. The enzyme catalyses tRNA(Arg) + L-arginine + ATP = L-arginyl-tRNA(Arg) + AMP + diphosphate. This is Arginine--tRNA ligase from Salmonella enteritidis PT4 (strain P125109).